The primary structure comprises 232 residues: Dephospho-CoA kinase (232 aa).

Residues 3–206 (IVGLTGGIAS…RPLTWIEFWR (204 aa)) enclose the DPCK domain. 8 to 15 (GGIASGKS) contacts ATP.

The protein belongs to the CoaE family.

It localises to the peroxisome. It catalyses the reaction 3'-dephospho-CoA + ATP = ADP + CoA + H(+). The protein operates within cofactor biosynthesis; coenzyme A biosynthesis; CoA from (R)-pantothenate: step 5/5. Catalyzes the phosphorylation of the 3'-hydroxyl group of dephosphocoenzyme A to form coenzyme A. The protein is Dephospho-CoA kinase of Arabidopsis thaliana (Mouse-ear cress).